The sequence spans 513 residues: 2-isopropylmalate synthase (513 aa).

Residues 5–268 (LIIFDTTLRD…DVGIDTTQIV (264 aa)) form the Pyruvate carboxyltransferase domain. 4 residues coordinate Mn(2+): D14, H202, H204, and N239. Residues 394–513 (RFISLSQRSE…KAVQKINPQI (120 aa)) form a regulatory domain region.

Belongs to the alpha-IPM synthase/homocitrate synthase family. LeuA type 1 subfamily. In terms of assembly, homodimer. The cofactor is Mn(2+).

The protein resides in the cytoplasm. The catalysed reaction is 3-methyl-2-oxobutanoate + acetyl-CoA + H2O = (2S)-2-isopropylmalate + CoA + H(+). It functions in the pathway amino-acid biosynthesis; L-leucine biosynthesis; L-leucine from 3-methyl-2-oxobutanoate: step 1/4. Functionally, catalyzes the condensation of the acetyl group of acetyl-CoA with 3-methyl-2-oxobutanoate (2-ketoisovalerate) to form 3-carboxy-3-hydroxy-4-methylpentanoate (2-isopropylmalate). The chain is 2-isopropylmalate synthase from Cupriavidus metallidurans (strain ATCC 43123 / DSM 2839 / NBRC 102507 / CH34) (Ralstonia metallidurans).